The following is a 1051-amino-acid chain: Putative helicase/primase complex protein (1051 aa).

Belongs to the asfivirus F1055L family.

May be involved in DNA replication. In Ornithodoros (relapsing fever ticks), this protein is Putative helicase/primase complex protein.